The following is a 95-amino-acid chain: uncharacterized protein (95 aa).

This is an uncharacterized protein from Archaeoglobus fulgidus (strain ATCC 49558 / DSM 4304 / JCM 9628 / NBRC 100126 / VC-16).